A 321-amino-acid chain; its full sequence is MKIYRQIKQSFSITKIVFSFFISLLLNLVAQPTICQAFPIYAQQAYQIPREATGRIVCANCHLGKKPVEIEVPQAVLPNTVFEAVVKIPIDKGAQQIQANGQKGPLNVGAVLMLPEGFKLAPAERLSEELKAKTAGLYFQPYSADKENILVIGPIPGDKNQEIIFPILSPNPETNKNVKYLKYQLHVGGNRGRGQVSPTGEKTNNTIYNASVNGRISEITKLENGGYEITITTKNGESKIETIPAGPSLVVKKGQTIKADQPLTIDPNVGGFGQMDTEIVLQSAGRVQGLIAFFISVVLAQIFLVLKKKQFEKVQAAEMNF.

The N-terminal stretch at 1-37 (MKIYRQIKQSFSITKIVFSFFISLLLNLVAQPTICQA) is a signal peptide. Residues Phe-38, Cys-58, Cys-61, and His-62 each contribute to the heme site. The chain crosses the membrane as a helical span at residues 287 to 306 (VQGLIAFFISVVLAQIFLVL).

The protein belongs to the cytochrome f family. In terms of assembly, the 4 large subunits of the cytochrome b6-f complex are cytochrome b6, subunit IV (17 kDa polypeptide, petD), cytochrome f and the Rieske protein, while the 4 small subunits are PetG, PetL, PetM and PetN. The complex functions as a dimer. Heme is required as a cofactor.

The protein resides in the plastid. The protein localises to the cyanelle thylakoid membrane. In terms of biological role, component of the cytochrome b6-f complex, which mediates electron transfer between photosystem II (PSII) and photosystem I (PSI), cyclic electron flow around PSI, and state transitions. In Cyanophora paradoxa, this protein is Cytochrome f (petA).